We begin with the raw amino-acid sequence, 313 residues long: D-alanine--D-alanine ligase (313 aa).

In terms of domain architecture, ATP-grasp spans 108–308 (KLVWQQLGIP…YQELVVKVLA (201 aa)). 138–193 (VAKLGLPLFVKPASEGSSVAVIKVKTADALVPALEEAVKFDKIVVVEKSIEGGGEY) lines the ATP pocket. Mg(2+)-binding residues include aspartate 262, glutamate 275, and asparagine 277.

This sequence belongs to the D-alanine--D-alanine ligase family. Mg(2+) is required as a cofactor. Requires Mn(2+) as cofactor.

It localises to the cytoplasm. It catalyses the reaction 2 D-alanine + ATP = D-alanyl-D-alanine + ADP + phosphate + H(+). Its pathway is cell wall biogenesis; peptidoglycan biosynthesis. Functionally, cell wall formation. The chain is D-alanine--D-alanine ligase from Paraburkholderia phymatum (strain DSM 17167 / CIP 108236 / LMG 21445 / STM815) (Burkholderia phymatum).